The primary structure comprises 162 residues: uncharacterized protein (162 aa).

Positions 1-18 (MRKTFLTLLCVSSAIAHA) are cleaved as a signal peptide.

This sequence belongs to the fimbrial protein family.

In terms of biological role, part of the yfcOPQRSUV fimbrial operon. Could contribute to adhesion to various surfaces in specific environmental niches. Increases adhesion to eukaryotic T24 bladder epithelial cells in the absence of fim genes. This is an uncharacterized protein from Escherichia coli (strain K12).